The following is a 208-amino-acid chain: FMN-dependent NADH:quinone oxidoreductase (208 aa).

FMN contacts are provided by residues S9, 15–17, 96–99, and 140–143; these read SAS, MYNF, and TRGG.

Belongs to the azoreductase type 1 family. As to quaternary structure, homodimer. It depends on FMN as a cofactor.

The catalysed reaction is 2 a quinone + NADH + H(+) = 2 a 1,4-benzosemiquinone + NAD(+). It catalyses the reaction N,N-dimethyl-1,4-phenylenediamine + anthranilate + 2 NAD(+) = 2-(4-dimethylaminophenyl)diazenylbenzoate + 2 NADH + 2 H(+). Quinone reductase that provides resistance to thiol-specific stress caused by electrophilic quinones. In terms of biological role, also exhibits azoreductase activity. Catalyzes the reductive cleavage of the azo bond in aromatic azo compounds to the corresponding amines. The protein is FMN-dependent NADH:quinone oxidoreductase of Ralstonia nicotianae (strain ATCC BAA-1114 / GMI1000) (Ralstonia solanacearum).